We begin with the raw amino-acid sequence, 561 residues long: Potassium-transporting ATPase potassium-binding subunit (561 aa).

Transmembrane regions (helical) follow at residues 2–22, 66–86, 135–155, 177–197, 253–273, 280–300, 327–347, 354–374, 378–398, 413–433, 482–502, and 531–551; these read GQGL…TPVL, IRAI…LIYF, ALGF…IAFI, ILLP…VPQT, LIET…YGVF, AWLL…VAAG, FGWA…CGAV, LMPQ…IWGG, GTAY…LMVG, IVLA…PSAI, LSTS…MLLL, and AGIV…LGPI.

Belongs to the KdpA family. As to quaternary structure, the system is composed of three essential subunits: KdpA, KdpB and KdpC.

The protein localises to the cell inner membrane. Part of the high-affinity ATP-driven potassium transport (or Kdp) system, which catalyzes the hydrolysis of ATP coupled with the electrogenic transport of potassium into the cytoplasm. This subunit binds the periplasmic potassium ions and delivers the ions to the membrane domain of KdpB through an intramembrane tunnel. This Nostoc sp. (strain PCC 7120 / SAG 25.82 / UTEX 2576) protein is Potassium-transporting ATPase potassium-binding subunit.